A 241-amino-acid chain; its full sequence is Large ribosomal subunit protein uL3 (241 aa).

Disordered regions lie at residues S140–D168 and A216–A241. Residue Q151 is modified to N5-methylglutamine.

Belongs to the universal ribosomal protein uL3 family. In terms of assembly, part of the 50S ribosomal subunit. Forms a cluster with proteins L14 and L19. Post-translationally, methylated by PrmB.

One of the primary rRNA binding proteins, it binds directly near the 3'-end of the 23S rRNA, where it nucleates assembly of the 50S subunit. This is Large ribosomal subunit protein uL3 from Xanthobacter autotrophicus (strain ATCC BAA-1158 / Py2).